The chain runs to 318 residues: 2-keto-3-deoxygluconate permease (318 aa).

10 consecutive transmembrane segments (helical) span residues leucine 10–proline 30, glycine 42–isoleucine 62, isoleucine 82–serine 102, leucine 109–leucine 129, alanine 139–glycine 159, leucine 163–alanine 183, threonine 201–histidine 221, threonine 224–alanine 244, valine 257–alanine 277, and alanine 289–tyrosine 309.

Belongs to the KdgT transporter family.

It is found in the cell inner membrane. It carries out the reaction 2-dehydro-3-deoxy-D-gluconate(in) + H(+)(in) = 2-dehydro-3-deoxy-D-gluconate(out) + H(+)(out). Its function is as follows. Catalyzes the proton-dependent uptake of 2-keto-3-deoxygluconate (KDG) into the cell. This is 2-keto-3-deoxygluconate permease from Xanthomonas axonopodis pv. citri (strain 306).